A 528-amino-acid polypeptide reads, in one-letter code: Alpha-amylase (528 aa).

The signal sequence occupies residues 1–28; it reads MNKKWLNIPALIALLAAIAFGSVAPAEA. Residues N168 and D228 each coordinate Ca(2+). D258 (nucleophile) is an active-site residue. Residue H262 participates in Ca(2+) binding. E286 acts as the Proton donor in catalysis.

Belongs to the glycosyl hydrolase 13 family. Monomer. It depends on Ca(2+) as a cofactor.

It carries out the reaction Endohydrolysis of (1-&gt;4)-alpha-D-glucosidic linkages in polysaccharides containing three or more (1-&gt;4)-alpha-linked D-glucose units.. This Niallia circulans (Bacillus circulans) protein is Alpha-amylase.